Consider the following 85-residue polypeptide: UPF0386 protein VF_0869 (85 aa).

It belongs to the UPF0386 family.

In Aliivibrio fischeri (strain ATCC 700601 / ES114) (Vibrio fischeri), this protein is UPF0386 protein VF_0869.